The primary structure comprises 831 residues: MRLPYSWLREVVAVGASGWDVTPGELEQTLLRIGHEVEEVIPLGPVDGPVTVGRVADIEELTGYKKPIRACAVDIGDRQYREIICGATNFAVGDLVVVALPGATLPGGFTISARKAYGRNSDGMICSAAELNLGADHSGILVLPPGAAEPGADGAGVLGLDDVVFHLAITPDRGYCMSVRGLARELACAYDLDFVDPASNSRVPPLPIEGPVWPLTVQPETGVRRFALRPVIGIDPAAVSPWWLQRRLLLCGIRATCPAVDVTNYVMLELGHPMHAHDRNRISGTLGVRFARSGETAVTLDGIERKLDTADVLIVDDAATAAIGGVMGAASTEVRADSTDVLLEAAIWDPAAVSRTQRRLHLPSEAARRYERTVDPAISVAALDRCARLLADIAGGEVSPTLTDWRGDPPCDDWSPPPIRMGVDVPDRIAGVAYPQGTTARRLAQIGAVVTHDGDTLTVTPPSWRPDLRQPADLVEEVLRLEGLEVIPSVLPPAPAGRGLTAGQQRRRTIGRSLALSGYVEILPTPFLPAGVFDLWGLEADDSRRMTTRVLNPLEADRPQLATTLLPALLEALVRNVSRGLVDVALFAIAQVVQPTEQTRGVGLIPVDRRPTDDEIAMLDASLPRQPQHVAAVLAGLREPRGPWGPGRPVEAADAFEAVRIIARASRVDVTLRPAQYLPWHPGRCAQVFVGESSVGHAGQLHPAVIERSGLPKGTCAVELNLDAIPCSAPLPAPRVSPYPAVFQDVSLVVAADIPAQAVADAVRAGAGDLLEDIALFDVFTGPQIGEHRKSLTFALRFRAPDRTLTEDDASAARDAAVQSAAERVGAVLRG.

The region spanning 44–155 (GPVDGPVTVG…GAAEPGADGA (112 aa)) is the tRNA-binding domain. The B5 domain occupies 414 to 489 (WSPPPIRMGV…RLEGLEVIPS (76 aa)). 4 residues coordinate Mg(2+): aspartate 467, aspartate 473, glutamate 476, and glutamate 477. Positions 737 to 830 (SPYPAVFQDV…AAERVGAVLR (94 aa)) constitute an FDX-ACB domain.

The protein belongs to the phenylalanyl-tRNA synthetase beta subunit family. Type 1 subfamily. In terms of assembly, tetramer of two alpha and two beta subunits. Mg(2+) is required as a cofactor.

Its subcellular location is the cytoplasm. The enzyme catalyses tRNA(Phe) + L-phenylalanine + ATP = L-phenylalanyl-tRNA(Phe) + AMP + diphosphate + H(+). In Mycobacterium bovis (strain ATCC BAA-935 / AF2122/97), this protein is Phenylalanine--tRNA ligase beta subunit.